The chain runs to 505 residues: MNLEAVKHAASLNEWSGLIPEIALGCLALLLLVVEMVLPKKRHDLIATIAIIGQFGILGWVAWDFHSPFLGRNDAFSGLLQFSYVGQAMRVFFLLSSIFVSILARVSLAKQQLPRIEFYHIVLVATAAMMLLAQANHFVLFFVALETLTVGLYILVSYFRTSPLSLEAGLKYLIMGALSSSLLLFGIVLLYGVAGNPALEGHTADPMNFAALTRFLALNPDNFLAAAGIVLVLSGIAFKIGAFPFQIWIPDVYQGAPTPTTAFLAVSSKAAGFAILLVLVNSVFGPYWWLVQPVLVAMAVATILFGNIAALTQHNVKRLIGLSGVSHAGFLLIGIIASHSVPSAVGAVLFYLFAYLLATFAVFGVMAHLAGADDAEQELDHYAGLAKEDPFLAAILAVALGSLAGIPPLAGFMGKLFVFIAAFKAGFYGLLAVAIVGVVISIYYYFGWIKAAFFETWTPPADAVNPRPARTPVGAAAGVALATLALCSILFGVYQGPLGAWLLAR.

The next 14 membrane-spanning stretches (helical) occupy residues 18-38 (LIPEIALGCLALLLLVVEMVL), 45-65 (LIATIAIIGQFGILGWVAWDF), 84-104 (YVGQAMRVFFLLSSIFVSILA), 116-136 (IEFYHIVLVATAAMMLLAQAN), 138-158 (FVLFFVALETLTVGLYILVSY), 173-193 (LIMGALSSSLLLFGIVLLYGV), 223-243 (FLAAAGIVLVLSGIAFKIGAF), 271-291 (AGFAILLVLVNSVFGPYWWLV), 292-312 (QPVLVAMAVATILFGNIAALT), 319-339 (LIGLSGVSHAGFLLIGIIASH), 345-365 (VGAVLFYLFAYLLATFAVFGV), 391-411 (FLAAILAVALGSLAGIPPLAG), 429-449 (GLLAVAIVGVVISIYYYFGWI), and 473-493 (VGAAAGVALATLALCSILFGV).

Belongs to the complex I subunit 2 family. In terms of assembly, NDH-1 is composed of 14 different subunits. Subunits NuoA, H, J, K, L, M, N constitute the membrane sector of the complex.

It is found in the cell inner membrane. It catalyses the reaction a quinone + NADH + 5 H(+)(in) = a quinol + NAD(+) + 4 H(+)(out). In terms of biological role, NDH-1 shuttles electrons from NADH, via FMN and iron-sulfur (Fe-S) centers, to quinones in the respiratory chain. The immediate electron acceptor for the enzyme in this species is believed to be ubiquinone. Couples the redox reaction to proton translocation (for every two electrons transferred, four hydrogen ions are translocated across the cytoplasmic membrane), and thus conserves the redox energy in a proton gradient. The polypeptide is NADH-quinone oxidoreductase subunit N 1 (Opitutus terrae (strain DSM 11246 / JCM 15787 / PB90-1)).